We begin with the raw amino-acid sequence, 261 residues long: tRNA pseudouridine synthase A (261 aa).

Aspartate 52 serves as the catalytic Nucleophile. Tyrosine 110 lines the substrate pocket.

Belongs to the tRNA pseudouridine synthase TruA family. As to quaternary structure, homodimer.

The catalysed reaction is uridine(38/39/40) in tRNA = pseudouridine(38/39/40) in tRNA. Its function is as follows. Formation of pseudouridine at positions 38, 39 and 40 in the anticodon stem and loop of transfer RNAs. The sequence is that of tRNA pseudouridine synthase A from Coxiella burnetii (strain CbuK_Q154) (Coxiella burnetii (strain Q154)).